Reading from the N-terminus, the 203-residue chain is Superoxide dismutase [Mn] (203 aa).

The Mn(2+) site is built by His27, His81, Asp167, and His171.

This sequence belongs to the iron/manganese superoxide dismutase family. As to quaternary structure, homodimer. The cofactor is Mn(2+).

The enzyme catalyses 2 superoxide + 2 H(+) = H2O2 + O2. Destroys superoxide anion radicals which are normally produced within the cells and which are toxic to biological systems. In Buchnera aphidicola subsp. Acyrthosiphon pisum (strain APS) (Acyrthosiphon pisum symbiotic bacterium), this protein is Superoxide dismutase [Mn] (sodA).